The following is an 86-amino-acid chain: Bacteriocin thailandicin (86 aa).

A cross-link (cyclopeptide (Leu-Trp)) is located at residues 23-86 (LTANLGISSY…KYGAKYSAAW (64 aa)).

Its subcellular location is the secreted. In terms of biological role, cyclopeptide antibiotic with bacteriolytic activity against the Gram-positive bacteria S.aureus and S.thermophilus, and lower activity against the Gram-negative bacteria E.coli and P.aeruginosa. The chain is Bacteriocin thailandicin from Enterococcus thailandicus.